Consider the following 690-residue polypeptide: Choline transporter-like 1 (690 aa).

The helical transmembrane segment at isoleucine 23–serine 43 threads the bilayer. Asparagine 134 carries an N-linked (GlcNAc...) asparagine glycan. 4 consecutive transmembrane segments (helical) span residues leucine 203–valine 223, tryptophan 237–tyrosine 259, alanine 282–isoleucine 302, and leucine 334–leucine 354. Asparagine 391 is a glycosylation site (N-linked (GlcNAc...) asparagine). The next 4 membrane-spanning stretches (helical) occupy residues isoleucine 415 to isoleucine 435, leucine 464 to leucine 484, phenylalanine 565 to leucine 585, and phenylalanine 594 to leucine 614.

Belongs to the CTL (choline transporter-like) family.

It is found in the membrane. This Anopheles gambiae (African malaria mosquito) protein is Choline transporter-like 1.